The chain runs to 90 residues: Hypnin-A3 (90 aa).

Functionally, lectin specific for core(alpha 1-6)fucosylated N-glycans. Inhibits platelet aggregation. The polypeptide is Hypnin-A3 (Hypnea japonica (Japanese red alga)).